The sequence spans 101 residues: Small ribosomal subunit protein uS14A (101 aa).

The disordered stretch occupies residues 31–73 (IKSPSTTPEARVAAQSELNRQPRDASPVRVRNRDSVDGRPRGH). Residues 61 to 70 (RNRDSVDGRP) show a composition bias toward basic and acidic residues.

Belongs to the universal ribosomal protein uS14 family. As to quaternary structure, part of the 30S ribosomal subunit. Contacts proteins S3 and S10.

Binds 16S rRNA, required for the assembly of 30S particles and may also be responsible for determining the conformation of the 16S rRNA at the A site. This chain is Small ribosomal subunit protein uS14A, found in Mycolicibacterium vanbaalenii (strain DSM 7251 / JCM 13017 / BCRC 16820 / KCTC 9966 / NRRL B-24157 / PYR-1) (Mycobacterium vanbaalenii).